We begin with the raw amino-acid sequence, 111 residues long: Kalata-B7 (111 aa).

The N-terminal stretch at 1–28 (MAKFTNCLALCLLLAAVVGAFGVELSEA) is a signal peptide. A propeptide spanning residues 29–75 (DKSAVVNEIAEKMALQEMLDGVDKLFLRKMKSSETTLTMFLKEMQLK) is cleaved from the precursor. The cyclopeptide (Gly-Asn) cross-link spans 76–104 (GLPVCGETCTLGTCYTQGCTCSWPICKRN). Disulfide bonds link Cys80-Cys94, Cys84-Cys96, and Cys89-Cys101. Residues 105-111 (GLPDVAA) constitute a propeptide that is removed on maturation.

Post-translationally, kalata-B7 is a cyclic peptide.

Probably participates in a plant defense mechanism. Has hemolytic activity. This chain is Kalata-B7 (OAK3), found in Oldenlandia affinis.